The chain runs to 539 residues: GMP synthase [glutamine-hydrolyzing] (539 aa).

One can recognise a Glutamine amidotransferase type-1 domain in the interval 4 to 202 (KILILDFGSQ…VLQIAGAKPD (199 aa)). Cys-81 (nucleophile) is an active-site residue. Active-site residues include His-176 and Glu-178. Residues 203–395 (WIMKNHIEEA…LGLPPEMVYR (193 aa)) form the GMPS ATP-PPase domain. 230-236 (SGGVDSS) provides a ligand contact to ATP.

As to quaternary structure, homodimer.

The enzyme catalyses XMP + L-glutamine + ATP + H2O = GMP + L-glutamate + AMP + diphosphate + 2 H(+). Its pathway is purine metabolism; GMP biosynthesis; GMP from XMP (L-Gln route): step 1/1. Its function is as follows. Catalyzes the synthesis of GMP from XMP. This Burkholderia orbicola (strain AU 1054) protein is GMP synthase [glutamine-hydrolyzing].